The following is a 1075-amino-acid chain: Error-prone DNA polymerase (1075 aa).

This sequence belongs to the DNA polymerase type-C family. DnaE2 subfamily.

It is found in the cytoplasm. The catalysed reaction is DNA(n) + a 2'-deoxyribonucleoside 5'-triphosphate = DNA(n+1) + diphosphate. In terms of biological role, DNA polymerase involved in damage-induced mutagenesis and translesion synthesis (TLS). It is not the major replicative DNA polymerase. The polypeptide is Error-prone DNA polymerase (Ralstonia nicotianae (strain ATCC BAA-1114 / GMI1000) (Ralstonia solanacearum)).